The chain runs to 118 residues: Class I hydrophobin hum2 (118 aa).

The N-terminal stretch at 1-19 (MQFKTIFATLAAFAAVASA) is a signal peptide. 4 disulfides stabilise this stretch: cysteine 33-cysteine 98, cysteine 40-cysteine 92, cysteine 41-cysteine 74, and cysteine 99-cysteine 112.

This sequence belongs to the fungal hydrophobin family. In terms of assembly, self-assembles to form functional amyloid fibrils called rodlets. Self-assembly into fibrillar rodlets occurs spontaneously at hydrophobic:hydrophilic interfaces and the rodlets further associate laterally to form amphipathic monolayers.

Its subcellular location is the secreted. The protein resides in the cell wall. In terms of biological role, aerial growth, conidiation, and dispersal of filamentous fungi in the environment rely upon a capability of their secreting small amphipathic proteins called hydrophobins (HPBs) with low sequence identity. Class I can self-assemble into an outermost layer of rodlet bundles on aerial cell surfaces, conferring cellular hydrophobicity that supports fungal growth, development and dispersal; whereas Class II form highly ordered films at water-air interfaces through intermolecular interactions but contribute nothing to the rodlet structure. Hum2 is a class I hydrophobin which that plays a role in, but seems not to be crucial for the formation of aerial hyphae. Hydrophobins of Mycosarcoma maydis have been functionally replaced, at least partially, by repellents. In Mycosarcoma maydis (Corn smut fungus), this protein is Class I hydrophobin hum2.